The primary structure comprises 528 residues: Nucleobase-ascorbate transporter 5 (528 aa).

Residues 1-20 (MSAPKSGGDPLPHPPKEQLP) form a disordered region. 12 helical membrane-spanning segments follow: residues 35–55 (AVLL…LIPS), 71–91 (LIQT…VFGT), 93–113 (LPAV…IMLS), 133–153 (TQGA…SGLW), 159–179 (FLSP…LYEL), 181–201 (FPGV…LILI), 219–239 (FAVI…TLGG), 285–305 (FAMM…FIAV), 367–387 (AGFM…ASIP), 390–410 (IIAA…LSLL), 418–438 (FRTL…PQYF), and 460–479 (MVNV…AYLL).

This sequence belongs to the nucleobase:cation symporter-2 (NCS2) (TC 2.A.40) family. Weakly expressed in the vasculature of developing leaves.

The protein resides in the membrane. The chain is Nucleobase-ascorbate transporter 5 (NAT5) from Arabidopsis thaliana (Mouse-ear cress).